The following is a 65-amino-acid chain: UPF0434 protein BQ10150 (65 aa).

This sequence belongs to the UPF0434 family.

The protein is UPF0434 protein BQ10150 of Bartonella quintana (strain Toulouse) (Rochalimaea quintana).